The sequence spans 272 residues: 5'-AMP-activated protein kinase subunit beta-2 (272 aa).

Residues 1-52 (MGNTTSDRVSGERHGAKAARSEGAGGHAPGKEHKIMVGSTDDPSVFSLPDSK) are disordered. Ser-39 carries the post-translational modification Phosphoserine. Position 40 is a phosphothreonine (Thr-40). A Phosphoserine; by ULK1 modification is found at Ser-69. A phosphoserine mark is found at Ser-95 and Ser-108. Residue Thr-148 is modified to Phosphothreonine. Phosphoserine occurs at positions 158, 170, 174, and 184.

Belongs to the 5'-AMP-activated protein kinase beta subunit family. AMPK is a heterotrimer of an alpha catalytic subunit (PRKAA1 or PRKAA2), a beta (PRKAB1 or PRKAB2) and a gamma non-catalytic subunits (PRKAG1, PRKAG2 or PRKAG3). In terms of processing, phosphorylated when associated with the catalytic subunit (PRKAA1 or PRKAA2). Phosphorylated by ULK1 and ULK2; leading to negatively regulate AMPK activity and suggesting the existence of a regulatory feedback loop between ULK1, ULK2 and AMPK.

Its function is as follows. Non-catalytic subunit of AMP-activated protein kinase (AMPK), an energy sensor protein kinase that plays a key role in regulating cellular energy metabolism. In response to reduction of intracellular ATP levels, AMPK activates energy-producing pathways and inhibits energy-consuming processes: inhibits protein, carbohydrate and lipid biosynthesis, as well as cell growth and proliferation. AMPK acts via direct phosphorylation of metabolic enzymes, and by longer-term effects via phosphorylation of transcription regulators. Also acts as a regulator of cellular polarity by remodeling the actin cytoskeleton; probably by indirectly activating myosin. Beta non-catalytic subunit acts as a scaffold on which the AMPK complex assembles, via its C-terminus that bridges alpha (PRKAA1 or PRKAA2) and gamma subunits (PRKAG1, PRKAG2 or PRKAG3). The sequence is that of 5'-AMP-activated protein kinase subunit beta-2 (PRKAB2) from Homo sapiens (Human).